Here is a 159-residue protein sequence, read N- to C-terminus: Succinate dehydrogenase [ubiquinone] cytochrome b small subunit, mitochondrial (159 aa).

Residues 1 to 36 constitute a mitochondrion transit peptide; that stretch reads MATLWRLSVLCGARGGGALVLRTSVVRPAHVSAFLQ. Residues 37 to 63 lie on the Mitochondrial matrix side of the membrane; that stretch reads DRHTPGWCGVQHIHLSPSHQASSKAAS. The helical transmembrane segment at 64 to 85 threads the bilayer; sequence LHWTGERVVSVLLLGLLPAAYL. Over 86–90 the chain is Mitochondrial intermembrane; the sequence is NPCSA. A helical transmembrane segment spans residues 91 to 111; the sequence is MDYSLAAALTLHGHWGIGQVV. H102 is a heme b binding site. Topologically, residues 112 to 120 are mitochondrial matrix; sequence TDYVRGDAL. Y114 provides a ligand contact to a ubiquinone. A helical membrane pass occupies residues 121–142; it reads QKVAKAGLLALSAFTFAGLCYF. Topologically, residues 143–159 are mitochondrial intermembrane; sequence NYHDVGICKAVAMLWKL.

Belongs to the CybS family. In terms of assembly, component of complex II composed of four subunits: the flavoprotein (FP) SDHA, iron-sulfur protein (IP) SDHB, and a cytochrome b560 composed of SDHC and SDHD.

Its subcellular location is the mitochondrion inner membrane. Its pathway is carbohydrate metabolism; tricarboxylic acid cycle. Its function is as follows. Membrane-anchoring subunit of succinate dehydrogenase (SDH) that is involved in complex II of the mitochondrial electron transport chain and is responsible for transferring electrons from succinate to ubiquinone (coenzyme Q). SDH also oxidizes malate to the non-canonical enol form of oxaloacetate, enol-oxaloacetate. Enol-oxaloacetate, which is a potent inhibitor of the succinate dehydrogenase activity, is further isomerized into keto-oxaloacetate. This Sus scrofa (Pig) protein is Succinate dehydrogenase [ubiquinone] cytochrome b small subunit, mitochondrial (SDHD).